The chain runs to 111 residues: Translation initiation factor 1A (111 aa).

Residues 12-86 (GEMPLPSEDE…KKGEVVYRYL (75 aa)) form the S1-like domain.

This sequence belongs to the eIF-1A family.

In terms of biological role, seems to be required for maximal rate of protein biosynthesis. Enhances ribosome dissociation into subunits and stabilizes the binding of the initiator Met-tRNA(I) to 40 S ribosomal subunits. This is Translation initiation factor 1A (eIF1A) from Aeropyrum pernix (strain ATCC 700893 / DSM 11879 / JCM 9820 / NBRC 100138 / K1).